Consider the following 195-residue polypeptide: 4'-phosphopantetheinyl transferase AcpT (195 aa).

Belongs to the P-Pant transferase superfamily. Gsp/Sfp/HetI/AcpT family.

It catalyses the reaction apo-[ACP] + CoA = holo-[ACP] + adenosine 3',5'-bisphosphate + H(+). Its function is as follows. May be involved in an alternative pathway for phosphopantetheinyl transfer and holo-ACP synthesis in E.coli. The native apo-protein substrate is unknown. Is able to functionally replace AcpS in vivo but only when expressed at high levels. This is 4'-phosphopantetheinyl transferase AcpT (acpT) from Escherichia coli O157:H7.